Consider the following 431-residue polypeptide: MGKNVVVLGTQWGDEGKGKIVDLLTDKAKYVVRYQGGHNAGHTLVIDGEKTVLHLIPSGVLRDNVKCLIGNGVVLCPKALMTEITMLEAKGVPVRERLLISDACPLILPYHNALDVAREVARGNKAIGTTGRGIGPAYEDKVARRGLRVGDLFCAETFAAKLKEIVEYHNFSLVNYYKVEPVNYEEVLADALAVADTIKKMTADISEILDQARIAGESIMFEGAQGTLLDIDHGTYPYVTSSNTTAGGVATGCGVGPRHLDYILGITKAYTTRVGSGPFPTELDDEVGNHLGTVGHEFGATTGRERRCGWFDAVAMHRAIQVNSVTGFCLTKLDVLDGLETLKICTGYKTEAGDIITVPPTAAEGYDKITPVYEEMPGWTESTVGATSVDVLPENALAYIKRIEEITGIPVDIISTGPDRVETIIKVNPFL.

Residues 13 to 19 (GDEGKGK) and 41 to 43 (GHT) contribute to the GTP site. Catalysis depends on Asp-14, which acts as the Proton acceptor. Mg(2+)-binding residues include Asp-14 and Gly-41. IMP contacts are provided by residues 14-17 (DEGK), 39-42 (NAGH), Thr-130, Arg-144, Gln-225, Thr-240, and Arg-304. The Proton donor role is filled by His-42. 300–306 (ATTGRER) provides a ligand contact to substrate. GTP is bound by residues Arg-306, 332–334 (KLD), and 415–417 (STG).

Belongs to the adenylosuccinate synthetase family. As to quaternary structure, homodimer. Mg(2+) serves as cofactor.

It is found in the cytoplasm. It carries out the reaction IMP + L-aspartate + GTP = N(6)-(1,2-dicarboxyethyl)-AMP + GDP + phosphate + 2 H(+). It functions in the pathway purine metabolism; AMP biosynthesis via de novo pathway; AMP from IMP: step 1/2. In terms of biological role, plays an important role in the de novo pathway of purine nucleotide biosynthesis. Catalyzes the first committed step in the biosynthesis of AMP from IMP. The sequence is that of Adenylosuccinate synthetase from Colwellia psychrerythraea (strain 34H / ATCC BAA-681) (Vibrio psychroerythus).